Reading from the N-terminus, the 117-residue chain is Histone H1-like protein HC1 (117 aa).

Positions 57 to 117 (EKSGLMTRKP…KSSKSRYLRK (61 aa)) are disordered. Residues 66-81 (PATKAKKAAATKKAAP) are compositionally biased toward basic residues. The segment covering 82–94 (KPKIQAKAAPKAK) has biased composition (low complexity). The segment covering 95–117 (ATTKKTPAKAKAKKSSKSRYLRK) has biased composition (basic residues).

Belongs to the histone H1/H5 family. HCT subfamily.

Functionally, might have a role analogous to that of eukaryotic histone proteins. The chain is Histone H1-like protein HC1 (hctA) from Chlamydia psittaci (Chlamydophila psittaci).